Reading from the N-terminus, the 422-residue chain is Lactoyl-CoA dehydratase subunit alpha (422 aa).

Belongs to the FldB/FldC dehydratase alpha/beta subunit family. In terms of assembly, heterodimer of an alpha (LcdA) and a beta (LcdB) subunit. The cofactor is [4Fe-4S] cluster. It depends on FMN as a cofactor. Requires riboflavin as cofactor. Mg(2+) serves as cofactor.

The enzyme catalyses (R)-lactoyl-CoA = acryloyl-CoA + H2O. It carries out the reaction (2R)-hydroxybutanoyl-CoA = (2E)-butenoyl-CoA + H2O. Activated by the LcdC protein. Functionally, involved in the acrylate pathway for the conversion of D-lactic acid to propionic acid. Catalyzes the reversible dehydration of Lactoyl-CoA and 2-hydroxybutyroyl-CoA to acryloyl-CoA and crotonyl-CoA, respectively. In Anaerotignum propionicum (Clostridium propionicum), this protein is Lactoyl-CoA dehydratase subunit alpha (lcdA).